The sequence spans 107 residues: Guanylate cyclase activator 2B (107 aa).

Residues 1-21 (MSGSQLWAAVVVLLLLQSAQG) form the signal peptide. The propeptide occupies 22 to 92 (VYIKYHGFQV…STFKALRTIA (71 aa)). 3 cysteine pairs are disulfide-bonded: Cys-63/Cys-76, Cys-96/Cys-104, and Cys-99/Cys-107.

The protein belongs to the guanylin family.

The protein resides in the secreted. In terms of biological role, endogenous activator of intestinal guanylate cyclase. It stimulates this enzyme through the same receptor binding region as the heat-stable enterotoxins. May be a potent physiological regulator of intestinal fluid and electrolyte transport. May be an autocrine/paracrine regulator of intestinal salt and water transport. In Notomys alexis (Spinifex hopping mouse), this protein is Guanylate cyclase activator 2B (GUCA2B).